The sequence spans 418 residues: Gamma-glutamyl phosphate reductase (418 aa).

The protein belongs to the gamma-glutamyl phosphate reductase family.

It is found in the cytoplasm. It carries out the reaction L-glutamate 5-semialdehyde + phosphate + NADP(+) = L-glutamyl 5-phosphate + NADPH + H(+). It participates in amino-acid biosynthesis; L-proline biosynthesis; L-glutamate 5-semialdehyde from L-glutamate: step 2/2. Catalyzes the NADPH-dependent reduction of L-glutamate 5-phosphate into L-glutamate 5-semialdehyde and phosphate. The product spontaneously undergoes cyclization to form 1-pyrroline-5-carboxylate. The sequence is that of Gamma-glutamyl phosphate reductase from Lacticaseibacillus casei (strain BL23) (Lactobacillus casei).